Consider the following 341-residue polypeptide: Phosphoribosylformylglycinamidine cyclo-ligase (341 aa).

This sequence belongs to the AIR synthase family.

The protein localises to the cytoplasm. The enzyme catalyses 2-formamido-N(1)-(5-O-phospho-beta-D-ribosyl)acetamidine + ATP = 5-amino-1-(5-phospho-beta-D-ribosyl)imidazole + ADP + phosphate + H(+). It functions in the pathway purine metabolism; IMP biosynthesis via de novo pathway; 5-amino-1-(5-phospho-D-ribosyl)imidazole from N(2)-formyl-N(1)-(5-phospho-D-ribosyl)glycinamide: step 2/2. The sequence is that of Phosphoribosylformylglycinamidine cyclo-ligase from Synechococcus elongatus (strain ATCC 33912 / PCC 7942 / FACHB-805) (Anacystis nidulans R2).